A 61-amino-acid polypeptide reads, in one-letter code: MAKKSMIAKAKRKPKFKVRAYTRCSICGRVHSVYRDFGICRICLRKMANEGLLPGVKKASW.

Residues C24, C27, C40, and C43 each coordinate Zn(2+).

The protein belongs to the universal ribosomal protein uS14 family. Zinc-binding uS14 subfamily. In terms of assembly, part of the 30S ribosomal subunit. Contacts proteins S3 and S10. Zn(2+) serves as cofactor.

Its function is as follows. Binds 16S rRNA, required for the assembly of 30S particles and may also be responsible for determining the conformation of the 16S rRNA at the A site. The chain is Small ribosomal subunit protein uS14 from Nautilia profundicola (strain ATCC BAA-1463 / DSM 18972 / AmH).